We begin with the raw amino-acid sequence, 131 residues long: Small ribosomal subunit protein eS17 (131 aa).

The protein belongs to the eukaryotic ribosomal protein eS17 family.

This chain is Small ribosomal subunit protein eS17 (RpS17), found in Drosophila melanogaster (Fruit fly).